We begin with the raw amino-acid sequence, 199 residues long: ATP-dependent Clp protease proteolytic subunit (199 aa).

Serine 97 functions as the Nucleophile in the catalytic mechanism. The active site involves histidine 122.

The protein belongs to the peptidase S14 family. In terms of assembly, fourteen ClpP subunits assemble into 2 heptameric rings which stack back to back to give a disk-like structure with a central cavity, resembling the structure of eukaryotic proteasomes.

It localises to the cytoplasm. The enzyme catalyses Hydrolysis of proteins to small peptides in the presence of ATP and magnesium. alpha-casein is the usual test substrate. In the absence of ATP, only oligopeptides shorter than five residues are hydrolyzed (such as succinyl-Leu-Tyr-|-NHMec, and Leu-Tyr-Leu-|-Tyr-Trp, in which cleavage of the -Tyr-|-Leu- and -Tyr-|-Trp bonds also occurs).. Cleaves peptides in various proteins in a process that requires ATP hydrolysis. Has a chymotrypsin-like activity. Plays a major role in the degradation of misfolded proteins. The sequence is that of ATP-dependent Clp protease proteolytic subunit from Pelobacter propionicus (strain DSM 2379 / NBRC 103807 / OttBd1).